Reading from the N-terminus, the 149-residue chain is Transcriptional repressor NrdR (149 aa).

A zinc finger lies at 3 to 34 (CPFCSATDTKVIDSRLVSDGHQVRRRRQCLAC). An ATP-cone domain is found at 49 to 139 (PKVIKSNGNR…VYRSFEDIKE (91 aa)).

It belongs to the NrdR family. The cofactor is Zn(2+).

Negatively regulates transcription of bacterial ribonucleotide reductase nrd genes and operons by binding to NrdR-boxes. The sequence is that of Transcriptional repressor NrdR from Aliivibrio salmonicida (strain LFI1238) (Vibrio salmonicida (strain LFI1238)).